The sequence spans 289 residues: Acetyl-coenzyme A carboxylase carboxyl transferase subunit beta 2 (289 aa).

A CoA carboxyltransferase N-terminal domain is found at 25 to 289 (VWTKCPSCEQ…TNKSIQPEAE (265 aa)). Positions 29, 32, 48, and 51 each coordinate Zn(2+). The C4-type zinc finger occupies 29 to 51 (CPSCEQVLYRIALKENLEVCPKC).

Belongs to the AccD/PCCB family. Acetyl-CoA carboxylase is a heterohexamer composed of biotin carboxyl carrier protein (AccB), biotin carboxylase (AccC) and two subunits each of ACCase subunit alpha (AccA) and ACCase subunit beta (AccD). The cofactor is Zn(2+).

The protein localises to the cytoplasm. It carries out the reaction N(6)-carboxybiotinyl-L-lysyl-[protein] + acetyl-CoA = N(6)-biotinyl-L-lysyl-[protein] + malonyl-CoA. It functions in the pathway lipid metabolism; malonyl-CoA biosynthesis; malonyl-CoA from acetyl-CoA: step 1/1. Functionally, component of the acetyl coenzyme A carboxylase (ACC) complex. Biotin carboxylase (BC) catalyzes the carboxylation of biotin on its carrier protein (BCCP) and then the CO(2) group is transferred by the transcarboxylase to acetyl-CoA to form malonyl-CoA. This chain is Acetyl-coenzyme A carboxylase carboxyl transferase subunit beta 2, found in Vibrio campbellii (strain ATCC BAA-1116).